The chain runs to 116 residues: Large ribosomal subunit protein bL19 (116 aa).

Belongs to the bacterial ribosomal protein bL19 family.

Its function is as follows. This protein is located at the 30S-50S ribosomal subunit interface and may play a role in the structure and function of the aminoacyl-tRNA binding site. In Chloroflexus aurantiacus (strain ATCC 29366 / DSM 635 / J-10-fl), this protein is Large ribosomal subunit protein bL19.